Here is a 2167-residue protein sequence, read N- to C-terminus: Papilin (2167 aa).

An N-terminal signal peptide occupies residues 1–19 (MRLLLFSAALLLCSVPTWA). In terms of domain architecture, TSP type-1 1 spans 76-123 (TGNWGPWVPENECSRSCGGGVQLEKRQCSGDCTGASVRYISCNLNACE). Cystine bridges form between C88-C117, C92-C122, and C103-C107. N268 carries an N-linked (GlcNAc...) asparagine glycan. 3 consecutive TSP type-1 domains span residues 341–402 (VDYM…VDCE), 404–459 (EWFT…TCNR), and 461–525 (ACPE…GPCE). 3 disulfides stabilise this stretch: C353-C396, C357-C401, and C368-C382. 2 N-linked (GlcNAc...) asparagine glycosylation sites follow: N386 and N445. Residues N541, N568, and N638 are each glycosylated (N-linked (GlcNAc...) asparagine). 2 consecutive TSP type-1 domains span residues 585–643 (CEYE…TNEE) and 645–702 (CTGT…DDCP). 8 N-linked (GlcNAc...) asparagine glycosylation sites follow: N715, N729, N741, N814, N820, N857, N933, and N1090. 6 disulfide bridges follow: C1089–C1141, C1099–C1124, C1116–C1137, C1150–C1202, C1161–C1185, and C1177–C1198. 2 consecutive BPTI/Kunitz inhibitor domains span residues 1089 to 1141 (CNQT…ETIC) and 1150 to 1202 (CYLP…SMFC). Residues 1239–1273 (QSAEQPQPQQPQQQQQQQQQQPQQPRQSMEDICRS) form a disordered region. The span at 1243–1263 (QPQPQQPQQQQQQQQQQPQQP) shows a compositional bias: low complexity. 3 cysteine pairs are disulfide-bonded: C1271–C1321, C1280–C1304, and C1296–C1317. The region spanning 1271-1321 (CRSRQDAGPCETYSDQWFYNAFSQECETFTYGGCGGNLNRFRSKDECEQRC) is the BPTI/Kunitz inhibitor 3 domain. The tract at residues 1332 to 1365 (ARQEQAQPAAQPAQPAQPSNIVSPPQQSASPVVV) is disordered. Cystine bridges form between C1375–C1425, C1384–C1408, C1400–C1421, C1447–C1497, C1456–C1480, C1472–C1493, C1504–C1554, C1513–C1537, and C1529–C1550. BPTI/Kunitz inhibitor domains lie at 1375 to 1425 (CHLN…ESLC), 1447 to 1497 (CDEA…KAAC), and 1504 to 1554 (CQLP…QARC). The segment at 1556–1615 (KDDQTTTTSQPEELPSLPLVQEDPQPRPAFSLKQSFAHSRRRDAPFARSVSARHHTPDSE) is disordered. 9 disulfides stabilise this stretch: C1621–C1671, C1630–C1654, C1646–C1667, C1731–C1781, C1740–C1764, C1756–C1777, C1790–C1840, C1799–C1823, and C1815–C1836. 3 consecutive BPTI/Kunitz inhibitor domains span residues 1621-1671 (CYAV…ETSC), 1731-1781 (CMLP…ERAC), and 1790-1840 (CELP…ESLC). N1848 carries an N-linked (GlcNAc...) asparagine glycan. Cystine bridges form between C1853–C1903, C1862–C1886, C1878–C1899, C1914–C1964, C1923–C1947, and C1939–C1960. BPTI/Kunitz inhibitor domains are found at residues 1853–1903 (CTLE…QQSC) and 1914–1964 (CTLR…FRRC). N-linked (GlcNAc...) asparagine glycosylation is found at N1992, N2087, and N2133. Residues 2075-2106 (RTTSRPMLTPSKNFSLGTPPTPSPSTVSTTPF) form a disordered region. Residues 2078–2090 (SRPMLTPSKNFSL) show a composition bias toward polar residues. Residues 2124-2163 (TSNSCMDVGNASTCDLIVKNGLCGKKRYGTFCCHTCTRVH) enclose the PLAC domain.

The protein belongs to the papilin family. Localizes to the basement membranes of the gonad primordium, pharynx and intestine (at protein level). Expressed in head and CAN neurons, coelomocytes, body-wall muscles and anal depressor and sphincter and stomatointestinal muscles. Expressed Isoform a: is expressed in body wall muscles and distal cell tips. Isoform b: expressed in embryonic muscles.

It is found in the secreted. Its subcellular location is the extracellular space. It localises to the extracellular matrix. The protein resides in the basement membrane. In terms of biological role, involved in pharynx morphogenesis probably by remodeling the basement membrane. Its function is as follows. Plays a role in embryogenesis, the second phase of distal cell tip migration and is required for distribution of the metalloproteinase, mig-17, during organogenesis. Plays a role in post embryonic distal cell tip migration. Essential extracellular matrix (ECM) protein required for hypodermal enclosure in the embryo. In Caenorhabditis elegans, this protein is Papilin (mig-6).